The chain runs to 122 residues: MARIAGVNIPTNKRVLIALQYIHGIGQKNAAEILEKVKIADDKRVNQLSDQEVLQIREVIDRDYMVEGDLRRETGMNIKRLMDLGCYRGLRHRRGLPVRGQRTHTNARTRKGPAKSIAGKKK.

Positions 95 to 122 are disordered; the sequence is GLPVRGQRTHTNARTRKGPAKSIAGKKK.

The protein belongs to the universal ribosomal protein uS13 family. As to quaternary structure, part of the 30S ribosomal subunit. Forms a loose heterodimer with protein S19. Forms two bridges to the 50S subunit in the 70S ribosome.

Functionally, located at the top of the head of the 30S subunit, it contacts several helices of the 16S rRNA. In the 70S ribosome it contacts the 23S rRNA (bridge B1a) and protein L5 of the 50S subunit (bridge B1b), connecting the 2 subunits; these bridges are implicated in subunit movement. Contacts the tRNAs in the A and P-sites. In Rhodopseudomonas palustris (strain BisB18), this protein is Small ribosomal subunit protein uS13.